Here is a 414-residue protein sequence, read N- to C-terminus: Serine/threonine transporter SstT (414 aa).

8 helical membrane-spanning segments follow: residues 16-36, 46-66, 84-104, 143-163, 180-200, 219-239, 300-320, and 332-352; these read GSLV…AWIS, LGTL…LMLV, ILFL…VFSF, ALLN…GFAL, AVTF…FGLV, LVVL…LLVF, MAGA…TLGV, and VVAS…LLLI.

The protein belongs to the dicarboxylate/amino acid:cation symporter (DAACS) (TC 2.A.23) family.

The protein resides in the cell inner membrane. The enzyme catalyses L-serine(in) + Na(+)(in) = L-serine(out) + Na(+)(out). The catalysed reaction is L-threonine(in) + Na(+)(in) = L-threonine(out) + Na(+)(out). Functionally, involved in the import of serine and threonine into the cell, with the concomitant import of sodium (symport system). The protein is Serine/threonine transporter SstT of Salmonella heidelberg (strain SL476).